The primary structure comprises 347 residues: Rhodopsin (347 aa).

Residues 1–33 (TEGPDFYIPMVNTTGVVRSPYEYPQYYLVNPAA) lie on the Extracellular side of the membrane. The N-linked (GlcNAc...) asparagine glycan is linked to Asn-12. The chain crosses the membrane as a helical span at residues 34 to 58 (YAVLGAYMFFLIIVGFPINFLTLYV). The Cytoplasmic portion of the chain corresponds to 59–70 (TLEHKKLRTPLN). Residues 71–93 (YILLNLAVADLFMVIGGFTTTMY) form a helical membrane-spanning segment. The Extracellular segment spans residues 94–107 (SSMHGYFVLGRLGC). Cys-107 and Cys-184 are oxidised to a cystine. Residues 108–130 (NIEGFFATLGGMISLWSLAVLAI) traverse the membrane as a helical segment. Residues 131–133 (ERW) carry the 'Ionic lock' involved in activated form stabilization motif. Over 131–149 (ERWVVVCKPISNFRFGENH) the chain is Cytoplasmic. A helical transmembrane segment spans residues 150 to 170 (AIMGVSLTWVMALACTVPPLV). At 171–199 (GWSRYIPEGMQCACGIDYYTRAEGYNNES) the chain is on the extracellular side. Asn-197 is a glycosylation site (N-linked (GlcNAc...) asparagine). Residues 200-221 (FVIYMFTFHFLFPMFIIFFCYG) traverse the membrane as a helical segment. The Cytoplasmic portion of the chain corresponds to 222-249 (RLLCAVKEAAAAQQESETTQRAEREVTR). The helical transmembrane segment at 250–271 (MVILMVIGYLVCWLPYASVAWF) threads the bilayer. Over 272–283 (IFTHKGSEFGPL) the chain is Extracellular. The chain crosses the membrane as a helical span at residues 284 to 305 (FMAVPSFFAKSSSIYNPIIYIC). Lys-293 bears the N6-(retinylidene)lysine mark. Topologically, residues 306–347 (MNKQFRQCMITTLFCGKNPFEGQEEDSSTKTEASSASSVSPA) are cytoplasmic. Cys-320 carries S-palmitoyl cysteine lipidation. Positions 326–347 (EGQEEDSSTKTEASSASSVSPA) are disordered. The segment covering 335–347 (KTEASSASSVSPA) has biased composition (low complexity).

This sequence belongs to the G-protein coupled receptor 1 family. Opsin subfamily. Post-translationally, phosphorylated on some or all of the serine and threonine residues present in the C-terminal region. Contains one covalently linked retinal chromophore.

It is found in the membrane. Its subcellular location is the cell projection. The protein localises to the cilium. It localises to the photoreceptor outer segment. Photoreceptor required for image-forming vision at low light intensity. While most salt water fish species use retinal as chromophore, most freshwater fish use 3-dehydroretinal, or a mixture of retinal and 3-dehydroretinal. Light-induced isomerization of 11-cis to all-trans retinal triggers a conformational change that activates signaling via G-proteins. Subsequent receptor phosphorylation mediates displacement of the bound G-protein alpha subunit by arrestin and terminates signaling. This is Rhodopsin (rho) from Sargocentron spiniferum (Sabre squirrelfish).